Consider the following 33-residue polypeptide: Brevinin-2JD (33 aa).

Residues Cys-27 and Cys-33 are joined by a disulfide bond.

Expressed by the skin glands.

It localises to the secreted. Has antibacterial activity against E.coli ATCC 25992 (MIC=38 uM), E.coli CIB 84492 (MIC=38 uM), S.aureus ATCC 25923 (MIC=19 uM) and S.aureus CIB 85462 (MIC=19 uM). Has antifungal activity against C.albicans (MIC=19 uM). Has weak hemolytic activity against rabbit erythrocytes. The chain is Brevinin-2JD from Odorrana jingdongensis (Jingdong frog).